A 123-amino-acid chain; its full sequence is Glycophorin-B (123 aa).

An N-terminal signal peptide occupies residues 1–19; the sequence is MYGKIIFVLLLSEIVSISA. A helical transmembrane segment spans residues 93 to 113; it reads VVIILIILCVMAGVIGTILLI.

Belongs to the glycophorin-A family. As to quaternary structure, component of the ankyrin-1 complex in the erythrocyte, composed of ANK1, RHCE, RHAG, SLC4A1, EPB42, GYPA, GYPB and AQP1. Interacts (via the N-terminal) with RHAG; this interaction bridges the (RHAG)2(RHCE) heterotrimer with the SLC4A1 Band 3 I dimer complexed with GYPA. The N-terminal extracellular domain is heavily glycosylated on serine and threonine residues.

It localises to the cell membrane. Component of the ankyrin-1 complex, a multiprotein complex involved in the stability and shape of the erythrocyte membrane. In Pan troglodytes (Chimpanzee), this protein is Glycophorin-B.